The following is a 144-amino-acid chain: Large ribosomal subunit protein eL27 (144 aa).

The protein belongs to the eukaryotic ribosomal protein eL27 family.

The protein resides in the cytoplasm. This is Large ribosomal subunit protein eL27 (RPL27) from Tetrahymena thermophila.